The following is a 1205-amino-acid chain: Solute carrier family 12 member 2 (1205 aa).

N-acetylmethionine is present on M1. The segment covering 1 to 22 has biased composition (low complexity); it reads MEPGPARPRLAPAARPGWGRAA. Residues 1-102 form a disordered region; sequence MEPGPARPRL…AAAAAAAAAA (102 aa). Topologically, residues 1 to 279 are cytoplasmic; it reads MEPGPARPRL…AESKGVVKFG (279 aa). Positions 23–35 are enriched in basic residues; that stretch reads GCRRRGGPARHGR. A phosphoserine mark is found at S74 and S76. Positions 77 to 80 match the RFXV motif 1 motif; that stretch reads RFQV. Over residues 87–102 the composition is skewed to low complexity; the sequence is AGRAAAAAAAAAAAAA. Positions 133-136 match the RFXV motif 2 motif; sequence RFRV. The segment covering 143-155 has biased composition (low complexity); that stretch reads ASSSADDSLSDAA. The interval 143–187 is disordered; that stretch reads ASSSADDSLSDAAGVGGDGPNVSFQNGGDTVLSEGSSLHSGGGSG. Phosphothreonine is present on residues T196, T200, T205, T210, and T223. Position 235 is a phosphoserine (S235). A Phosphothreonine modification is found at T259. Residues 280 to 309 form a discontinuously helical membrane-spanning segment; it reads WIKGVLVRCMLNIWGVMLFIRLSWIVGQAG. L290 lines the Na(+) pocket. N291 and I292 together coordinate K(+). W293 is a binding site for Na(+). 3 residues coordinate chloride: G294, V295, and M296. A helical membrane pass occupies residues 310–329; that stretch reads IGLSVVVIAMATVVTTITGL. Residues 330-360 lie on the Cytoplasmic side of the membrane; that stretch reads STSAIATNGFVRGGGAYYLISRSLGPEFGGA. Residues 361–388 form a helical membrane-spanning segment; it reads IGLIFAFANAVAVAMYVVGFAETVVELL. Residue F365 coordinates chloride. K(+) is bound at residue Y376. The Extracellular segment spans residues 389-398; the sequence is KEHSILMIDE. The helical transmembrane segment at 399 to 422 threads the bilayer; that stretch reads INDIRIIGAITVVILLGISVAGME. Residues 423 to 425 lie on the Cytoplasmic side of the membrane; that stretch reads WEA. The chain crosses the membrane as a helical span at residues 426–447; sequence KAQIVLLVILLLAIADFVIGTF. Topologically, residues 448 to 479 are extracellular; that stretch reads ISLESKKPKGFFGYKSEIFNENFGPDFREEET. Residues 480–497 form a discontinuously helical membrane-spanning segment; sequence FFSVFAIFFPAATGILAG. Residues P489, A490, and T492 each coordinate K(+). Chloride contacts are provided by P489 and A490. G493 and I494 together coordinate chloride. At 498 to 512 the chain is on the cytoplasmic side; that stretch reads ANISGDLADPQSAIP. Residues 513-534 form a helical membrane-spanning segment; the sequence is KGTLLAILITTVVYIGIAVSVG. At 535-591 the chain is on the extracellular side; that stretch reads SCVVRDATGNVNDTITTELTNCTSAACKLNFDFSYCESNTCSYGLMNNFQVMSMVSG. Residues N546 and N555 are each glycosylated (N-linked (GlcNAc...) asparagine). 2 cysteine pairs are disulfide-bonded: C556-C561 and C570-C575. A helical membrane pass occupies residues 592–616; sequence FAPLISAGIFSATLSSALASLVSAP. Na(+) is bound by residues A603, S606, and S607. Residues 617-644 are Cytoplasmic-facing; the sequence is KIFQALCKDNIYPAFQMFAKGYGKNNEP. The next 2 helical transmembrane spans lie at 645–665 and 666–684; these read LRGY…AELN and VIAP…LINF. The chloride site is built by F675 and Y679. The Cytoplasmic portion of the chain corresponds to 685–707; that stretch reads SVFHASLAKSPGWRPAFKYYNMW. The next 2 helical transmembrane spans lie at 708 to 725 and 726 to 738; these read ISLI…VINW and WAAL…VLGL. Residues 739–1205 lie on the Cytoplasmic side of the membrane; sequence YIYVTYKKPD…NHQSVLTFYS (467 aa). Residues 754 to 771 are scissor helix; sequence STQALTYLSALQHSIRLS. 2 positions are modified to phosphoserine: S933 and S937. A disordered region spans residues 953–986; that stretch reads SDQDTCKSSGEKSITQKDEEEDGKTPTQPLLKKE. S987 is modified (phosphoserine).

The protein belongs to the SLC12A transporter family. As to quaternary structure, homodimer; adopts a domain-swap conformation at the scissor helices connecting the transmembrane domain and C-terminal domain. In terms of processing, phosphorylated at Thr-196, Thr-200 and Thr-205 by OXSR1/OSR1 and STK39/SPAK downstream of WNK kinases (WNK1, WNK2, WNK3 or WNK4), promoting its activity. Widely expressed. High expression found in the cochlea, cochlear lateral wall, and the choroid plexus. Lower expression found in the cerebellum and the cortex.

It is found in the basolateral cell membrane. It catalyses the reaction K(+)(out) + 2 chloride(out) + Na(+)(out) = K(+)(in) + 2 chloride(in) + Na(+)(in). Its activity is regulated as follows. Activated following phosphorylation by OXSR1/OSR1 and STK39/SPAK downstream of WNK kinases (WNK1, WNK2, WNK3 or WNK4). Inhibited by bumetanide and furosemide. In terms of biological role, cation-chloride cotransporter which mediates the electroneutral transport of chloride, potassium and/or sodium ions across the membrane. Plays a vital role in the regulation of ionic balance and cell volume. This Mus musculus (Mouse) protein is Solute carrier family 12 member 2 (Slc12a2).